Consider the following 126-residue polypeptide: Aspartate 1-decarboxylase (126 aa).

S25 functions as the Schiff-base intermediate with substrate; via pyruvic acid in the catalytic mechanism. A Pyruvic acid (Ser) modification is found at S25. T57 is a binding site for substrate. The active-site Proton donor is Y58. 73–75 lines the substrate pocket; it reads GAA.

It belongs to the PanD family. Heterooctamer of four alpha and four beta subunits. It depends on pyruvate as a cofactor. In terms of processing, is synthesized initially as an inactive proenzyme, which is activated by self-cleavage at a specific serine bond to produce a beta-subunit with a hydroxyl group at its C-terminus and an alpha-subunit with a pyruvoyl group at its N-terminus.

Its subcellular location is the cytoplasm. It catalyses the reaction L-aspartate + H(+) = beta-alanine + CO2. It participates in cofactor biosynthesis; (R)-pantothenate biosynthesis; beta-alanine from L-aspartate: step 1/1. In terms of biological role, catalyzes the pyruvoyl-dependent decarboxylation of aspartate to produce beta-alanine. This chain is Aspartate 1-decarboxylase, found in Salmonella dublin (strain CT_02021853).